The chain runs to 46 residues: MVMLGKITEFFRNLPSKKCAECGKKIEEQHECYGNICNDCIKVNDL.

This is an uncharacterized protein from Bacillus subtilis (strain 168).